A 321-amino-acid polypeptide reads, in one-letter code: Tetraacyldisaccharide 4'-kinase (321 aa).

ATP is bound at residue 54–61; that stretch reads SVGGTGKT.

This sequence belongs to the LpxK family.

The enzyme catalyses a lipid A disaccharide + ATP = a lipid IVA + ADP + H(+). Its pathway is glycolipid biosynthesis; lipid IV(A) biosynthesis; lipid IV(A) from (3R)-3-hydroxytetradecanoyl-[acyl-carrier-protein] and UDP-N-acetyl-alpha-D-glucosamine: step 6/6. Transfers the gamma-phosphate of ATP to the 4'-position of a tetraacyldisaccharide 1-phosphate intermediate (termed DS-1-P) to form tetraacyldisaccharide 1,4'-bis-phosphate (lipid IVA). The chain is Tetraacyldisaccharide 4'-kinase from Rickettsia conorii (strain ATCC VR-613 / Malish 7).